Reading from the N-terminus, the 250-residue chain is N-acyl homoserine lactonase (250 aa).

Positions 104, 106, 108, 109, 169, 191, and 235 each coordinate Zn(2+).

This sequence belongs to the metallo-beta-lactamase superfamily. Monomer. Zn(2+) is required as a cofactor.

It carries out the reaction an N-acyl-L-homoserine lactone + H2O = an N-acyl-L-homoserine + H(+). The protein is N-acyl homoserine lactonase of Bacillus cereus.